The sequence spans 239 residues: tRNA (guanine-N(7)-)-methyltransferase (239 aa).

S-adenosyl-L-methionine contacts are provided by E69, E94, D121, and D144. D144 is an active-site residue. K148 is a substrate binding site. The interaction with RNA stretch occupies residues R150–R155. Substrate-binding positions include D180 and T217 to E220.

This sequence belongs to the class I-like SAM-binding methyltransferase superfamily. TrmB family. As to quaternary structure, monomer.

The enzyme catalyses guanosine(46) in tRNA + S-adenosyl-L-methionine = N(7)-methylguanosine(46) in tRNA + S-adenosyl-L-homocysteine. Its pathway is tRNA modification; N(7)-methylguanine-tRNA biosynthesis. Its function is as follows. Catalyzes the formation of N(7)-methylguanine at position 46 (m7G46) in tRNA. The sequence is that of tRNA (guanine-N(7)-)-methyltransferase from Klebsiella pneumoniae subsp. pneumoniae (strain ATCC 700721 / MGH 78578).